We begin with the raw amino-acid sequence, 108 residues long: Inner membrane protein H108R (108 aa).

The helical transmembrane segment at 10-32 threads the bilayer; that stretch reads LIVIITILITTRELSTTMLIVSL. Residues 49 to 64 are compositionally biased toward polar residues; that stretch reads ENNTFSMPQKNSFSES. Positions 49–69 are disordered; that stretch reads ENNTFSMPQKNSFSESYNKDK. The N-linked (GlcNAc...) asparagine; by host glycan is linked to asparagine 50.

The protein belongs to the asfivirus H108R family.

It localises to the virion membrane. In Ornithodoros (relapsing fever ticks), this protein is Inner membrane protein H108R.